The sequence spans 418 residues: Serine--tRNA ligase (418 aa).

231-233 contacts L-serine; sequence TAE. Position 262 to 264 (262 to 264) interacts with ATP; sequence RSE. Position 285 (glutamate 285) interacts with L-serine. Residue 349–352 participates in ATP binding; it reads EISS. Serine 385 serves as a coordination point for L-serine.

It belongs to the class-II aminoacyl-tRNA synthetase family. Type-1 seryl-tRNA synthetase subfamily. As to quaternary structure, homodimer. The tRNA molecule binds across the dimer.

The protein localises to the cytoplasm. It carries out the reaction tRNA(Ser) + L-serine + ATP = L-seryl-tRNA(Ser) + AMP + diphosphate + H(+). The catalysed reaction is tRNA(Sec) + L-serine + ATP = L-seryl-tRNA(Sec) + AMP + diphosphate + H(+). The protein operates within aminoacyl-tRNA biosynthesis; selenocysteinyl-tRNA(Sec) biosynthesis; L-seryl-tRNA(Sec) from L-serine and tRNA(Sec): step 1/1. Functionally, catalyzes the attachment of serine to tRNA(Ser). Is also able to aminoacylate tRNA(Sec) with serine, to form the misacylated tRNA L-seryl-tRNA(Sec), which will be further converted into selenocysteinyl-tRNA(Sec). The protein is Serine--tRNA ligase of Ureaplasma urealyticum serovar 10 (strain ATCC 33699 / Western).